The sequence spans 248 residues: tRNA pseudouridine synthase A (248 aa).

Asp53 acts as the Nucleophile in catalysis. Residue Tyr111 participates in substrate binding.

Belongs to the tRNA pseudouridine synthase TruA family. In terms of assembly, homodimer.

It catalyses the reaction uridine(38/39/40) in tRNA = pseudouridine(38/39/40) in tRNA. Its function is as follows. Formation of pseudouridine at positions 38, 39 and 40 in the anticodon stem and loop of transfer RNAs. This Listeria monocytogenes serotype 4b (strain CLIP80459) protein is tRNA pseudouridine synthase A.